A 262-amino-acid polypeptide reads, in one-letter code: Small ribosomal subunit protein eS4 (262 aa).

In terms of domain architecture, S4 RNA-binding spans leucine 42 to aspartate 104.

It belongs to the eukaryotic ribosomal protein eS4 family.

This chain is Small ribosomal subunit protein eS4 (RpS4), found in Lysiphlebus testaceipes (Greenbugs aphid parastoid).